The following is a 706-amino-acid chain: Semenogelin-2 (706 aa).

Positions 1 to 23 are cleaved as a signal peptide; the sequence is MKSIILFVLSLLLILEKQAAVMG. Disordered stretches follow at residues 25-62, 131-156, and 276-678; these read KGGSKGQLSSGSSRFPHRHRSQHYSGQKDKQHTESKGS, KGGQVHHGTQNPSQDQGNSPSGKGIF, and NLNQ…SGAH. Basic and acidic residues predominate over residues 50–59; it reads GQKDKQHTES. Polar residues predominate over residues 137-151; sequence HGTQNPSQDQGNSPS. Basic and acidic residues predominate over residues 297 to 308; sequence TEERQPNHEENS. Residues 329 to 339 show a composition bias toward polar residues; that stretch reads KSQNQVTIPSQ. Residues 340 to 349 show a composition bias toward basic and acidic residues; that stretch reads DQEHGHKENK. The segment covering 389–399 has biased composition (polar residues); it reads KSQNQVTIPSQ. A compositionally biased stretch (basic and acidic residues) spans 400-409; the sequence is DQEHGHKENK. A compositionally biased stretch (polar residues) spans 449-459; sequence KSQNQVTIPSQ. The span at 460–469 shows a compositional bias: basic and acidic residues; it reads DQEHGHKENK. A compositionally biased stretch (polar residues) spans 509–519; it reads KSQNQVAIPSQ. Basic and acidic residues predominate over residues 520–529; the sequence is DQEHGHKENK. Over residues 569–579 the composition is skewed to polar residues; that stretch reads KSQNQVTIPSQ. Over residues 580-589 the composition is skewed to basic and acidic residues; the sequence is DQEHGHKENK. 2 stretches are compositionally biased toward polar residues: residues 611–622 and 630–653; these read KDVSQSSLSFQT and SQIQTPNPNQGQWSGQNAKGNSGK. A compositionally biased stretch (basic and acidic residues) spans 654–670; sequence SADREQDLLSHEQEGRY.

Belongs to the semenogelin family. As to quaternary structure, interacts with SERPINA5.

It localises to the secreted. In terms of biological role, participates in the formation of a gel matrix (sperm coagulum) entrapping the accessory gland secretions and ejaculated spermatozoa. The polypeptide is Semenogelin-2 (SEMG2) (Macaca mulatta (Rhesus macaque)).